Consider the following 316-residue polypeptide: MLPSSIQISGEPLSGAEVRDICRGLRDNAVRLLSLRGCRLCDRDFGRICRALAGATSLAQLNLNLGVVSSPSRIKQLAEALRTNRSIQSLFLHGSPLTDAGLALLNPALALHPALVALDLGDCMLGDEAINLICGLLPPDGAKSGLKELTLSANPGITPKGWSRLAIAVAHSSQVRVLNLDYNPLGDHVAGMLAVAVASSRTLEVLDLEGTGLTNQSAQTLLDMVENYPTALRSLVLAENSISPELQQQICDLLSEGEEEEEVAGGAGDTQEWERGREPAAHQRGSSSWMCPSDPSSQMVLMTSGLGDSLLAETEM.

7 LRR repeats span residues 57–78 (SLAQLNLNLGVVSSPSRIKQLA), 86–106 (SIQSLFLHGSPLTDAGLALLN), 114–137 (ALVALDLGDCMLGDEAINLICGLL), 145–166 (GLKELTLSANPGITPKGWSRLA), 174–187 (QVRVLNLDYNPLGD), 202–223 (TLEVLDLEGTGLTNQSAQTLLD), and 231–250 (ALRSLVLAENSISPELQQQI). A disordered region spans residues 257-296 (GEEEEEVAGGAGDTQEWERGREPAAHQRGSSSWMCPSDPS). Basic and acidic residues predominate over residues 272–281 (EWERGREPAA). Over residues 286–296 (SSSWMCPSDPS) the composition is skewed to low complexity.

This is Leucine-rich repeat-containing protein 73 (LRRC73) from Homo sapiens (Human).